A 480-amino-acid chain; its full sequence is Sestrin-2 (480 aa).

Methionine 1 carries the post-translational modification N-acetylmethionine. The tract at residues 20 to 45 is disordered; sequence PGGVGDSGPGEEQRESRARRGPRGPS. The interval 66 to 239 is N-terminal domain; mediates the alkylhydroperoxide reductase activity; sequence GLEALMSSGR…APTPPSEQSS (174 aa). Residue cysteine 125 is the Cysteine sulfenic acid (-SOH) intermediate of the active site. Lysine 175 participates in a covalent cross-link: Glycyl lysine isopeptide (Lys-Gly) (interchain with G-Cter in ubiquitin). The segment at 222-252 is disordered; sequence ADGSPAPQAPTPPSEQSSPPSRDPLNNSGGF. Serine 249 carries the phosphoserine modification. Residues 308–480 form a C-terminal domain; mediates TORC1 regulation region; sequence PHPDMLCFVE…ALRAITRYMT (173 aa). L-leucine-binding positions include 374 to 377, threonine 386, and glutamate 451; that span reads TYNT.

The protein belongs to the sestrin family. As to quaternary structure, interacts with the GATOR2 complex which is composed of MIOS, SEC13, SEH1L, WDR24 and WDR59; the interaction is negatively regulated by leucine. Conveys leucine availability via direct interaction with SEH1L and WDR24 components of the GATOR2 complex. Interacts with RRAGA, RRAGB, RRAGC and RRAGD; may function as a guanine nucleotide dissociation inhibitor for RRAGs and regulate them. May interact with the TORC2 complex. Interacts with KEAP1, RBX1, SQSTM and ULK1; to regulate the degradation of KEAP1. May also associate with the complex composed of TSC1, TSC2 and the AMP-responsive protein kinase/AMPK to regulate TORC1 signaling. May interact with PRDX1. In terms of processing, phosphorylated by ULK1 at multiple sites. Post-translationally, ubiquitinated at Lys-175 by RNF167 via 'Lys-63'-linked polyubiquitination in response to leucine deprivation: ubiquitination promotes SESN2-interaction with the GATOR2 complex, leading to inhibit the TORC1 signaling pathway. Deubiquitinated at Lys-175 by STAMBPL1, promoting the TORC1 signaling pathway. Ubiquitinated by RNF186; ubiquitination mediates proteasomal degradation.

It localises to the cytoplasm. It carries out the reaction a hydroperoxide + L-cysteinyl-[protein] = S-hydroxy-L-cysteinyl-[protein] + an alcohol. Functions as an intracellular leucine sensor that negatively regulates the mTORC1 signaling pathway through the GATOR complex. In absence of leucine, binds the GATOR subcomplex GATOR2 and prevents mTORC1 signaling. Binding of leucine to SESN2 disrupts its interaction with GATOR2 thereby activating the TORC1 signaling pathway. This stress-inducible metabolic regulator also plays a role in protection against oxidative and genotoxic stresses. May negatively regulate protein translation in response to endoplasmic reticulum stress, via mTORC1. May positively regulate the transcription by NFE2L2 of genes involved in the response to oxidative stress by facilitating the SQSTM1-mediated autophagic degradation of KEAP1. May also mediate TP53 inhibition of TORC1 signaling upon genotoxic stress. Moreover, may prevent the accumulation of reactive oxygen species (ROS) through the alkylhydroperoxide reductase activity born by the N-terminal domain of the protein. Was originally reported to contribute to oxidative stress resistance by reducing PRDX1. However, this could not be confirmed. In Pongo abelii (Sumatran orangutan), this protein is Sestrin-2.